Here is a 725-residue protein sequence, read N- to C-terminus: Polyribonucleotide nucleotidyltransferase (725 aa).

Mg(2+)-binding residues include Asp487 and Asp493. Residues 554-613 (PRIETMQIPTDKIREVIGTGGKVIREIVEKTGAKIDIQDTGVVKIASSDGKAIKAAYNWI) enclose the KH domain. An S1 motif domain is found at 623-691 (GMIYDGTVVK…ERGKIRLSMK (69 aa)). Residues 699–725 (EDLTEKLKAEREADRNRERQARQSAGE) are disordered. Basic and acidic residues predominate over residues 701 to 719 (LTEKLKAEREADRNRERQA).

The protein belongs to the polyribonucleotide nucleotidyltransferase family. Requires Mg(2+) as cofactor.

The protein localises to the cytoplasm. It catalyses the reaction RNA(n+1) + phosphate = RNA(n) + a ribonucleoside 5'-diphosphate. In terms of biological role, involved in mRNA degradation. Catalyzes the phosphorolysis of single-stranded polyribonucleotides processively in the 3'- to 5'-direction. This is Polyribonucleotide nucleotidyltransferase from Methylobacterium sp. (strain 4-46).